Here is a 307-residue protein sequence, read N- to C-terminus: 2-dehydropantoate 2-reductase (307 aa).

Residues 7–12 (GSGAMG), asparagine 102, and alanine 128 each bind NADP(+). Asparagine 102 contacts substrate. Lysine 184 acts as the Proton donor in catalysis. 3 residues coordinate substrate: asparagine 188, asparagine 192, and serine 255. Glutamate 268 contacts NADP(+).

The protein belongs to the ketopantoate reductase family.

The protein resides in the cytoplasm. The enzyme catalyses (R)-pantoate + NADP(+) = 2-dehydropantoate + NADPH + H(+). It participates in cofactor biosynthesis; (R)-pantothenate biosynthesis; (R)-pantoate from 3-methyl-2-oxobutanoate: step 2/2. Functionally, catalyzes the NADPH-dependent reduction of ketopantoate into pantoic acid. This Streptococcus pyogenes serotype M18 (strain MGAS8232) protein is 2-dehydropantoate 2-reductase (apbA).